The following is a 223-amino-acid chain: DNA mismatch repair protein MutH (223 aa).

This sequence belongs to the MutH family.

It localises to the cytoplasm. Functionally, sequence-specific endonuclease that cleaves unmethylated GATC sequences. It is involved in DNA mismatch repair. This chain is DNA mismatch repair protein MutH, found in Shewanella baltica (strain OS223).